The following is a 287-amino-acid chain: Pantothenate synthetase (287 aa).

30 to 37 contacts ATP; it reads MGNLHSGH. Catalysis depends on H37, which acts as the Proton donor. (R)-pantoate is bound at residue Q61. Residue Q61 coordinates beta-alanine. 149–152 is a binding site for ATP; it reads GEKD. Residue Q155 coordinates (R)-pantoate. ATP-binding positions include V178 and 186-189; that span reads LSSR.

The protein belongs to the pantothenate synthetase family. As to quaternary structure, homodimer.

It localises to the cytoplasm. It catalyses the reaction (R)-pantoate + beta-alanine + ATP = (R)-pantothenate + AMP + diphosphate + H(+). It participates in cofactor biosynthesis; (R)-pantothenate biosynthesis; (R)-pantothenate from (R)-pantoate and beta-alanine: step 1/1. Its function is as follows. Catalyzes the condensation of pantoate with beta-alanine in an ATP-dependent reaction via a pantoyl-adenylate intermediate. In Pseudomonas putida (strain ATCC 47054 / DSM 6125 / CFBP 8728 / NCIMB 11950 / KT2440), this protein is Pantothenate synthetase.